The following is a 275-amino-acid chain: Bis(5'-nucleosyl)-tetraphosphatase, symmetrical (275 aa).

The protein belongs to the Ap4A hydrolase family.

The catalysed reaction is P(1),P(4)-bis(5'-adenosyl) tetraphosphate + H2O = 2 ADP + 2 H(+). Its function is as follows. Hydrolyzes diadenosine 5',5'''-P1,P4-tetraphosphate to yield ADP. This Nitrosospira multiformis (strain ATCC 25196 / NCIMB 11849 / C 71) protein is Bis(5'-nucleosyl)-tetraphosphatase, symmetrical.